The primary structure comprises 125 residues: Fluoride-specific ion channel FluC (125 aa).

Transmembrane regions (helical) follow at residues 5–25, 33–53, 66–86, and 100–120; these read IFLVGIGGGIGSVLRFVVSLL, IFPLTTFVVNLLGCFFVGILV, VKIFFITGFCGGFTTFSSFSL, and LVLYILINIIAGCAAVLLGYI. 2 residues coordinate Na(+): glycine 76 and threonine 79.

The protein belongs to the fluoride channel Fluc/FEX (TC 1.A.43) family.

The protein resides in the cell inner membrane. The enzyme catalyses fluoride(in) = fluoride(out). With respect to regulation, na(+) is not transported, but it plays an essential structural role and its presence is essential for fluoride channel function. In terms of biological role, fluoride-specific ion channel. Important for reducing fluoride concentration in the cell, thus reducing its toxicity. The protein is Fluoride-specific ion channel FluC of Azobacteroides pseudotrichonymphae genomovar. CFP2.